Consider the following 66-residue polypeptide: MISYIVQTLIVCIAIYAYEWKNFRSANNLTKWAFSLLIAGSAFLWIYMRVNPLLPRLGHLFKYIPF.

A helical membrane pass occupies residues 32–49 (WAFSLLIAGSAFLWIYMR).

It is found in the membrane. This is an uncharacterized protein from Bacillus subtilis (strain 168).